Reading from the N-terminus, the 153-residue chain is Methylglyoxal synthase (153 aa).

One can recognise an MGS-like domain in the interval 6–153; sequence RTIAARKHIA…QRYLAERLPS (148 aa). Substrate is bound by residues His19, Lys23, 45-48, and 65-66; these read TGTT and SG. Asp71 functions as the Proton donor/acceptor in the catalytic mechanism. His98 provides a ligand contact to substrate.

The protein belongs to the methylglyoxal synthase family.

It catalyses the reaction dihydroxyacetone phosphate = methylglyoxal + phosphate. Catalyzes the formation of methylglyoxal from dihydroxyacetone phosphate. This is Methylglyoxal synthase from Sodalis glossinidius (strain morsitans).